The following is a 490-amino-acid chain: B3 domain-containing protein REM14 (490 aa).

3 DNA-binding regions (TF-B3) span residues 3-95, 130-226, and 236-333; these read NQHF…LGPS, CFSA…LPKG, and CFVA…LSNE. A disordered region spans residues 343–367; it reads NEVESLSTDQESHEESSHNEKISRR. A compositionally biased stretch (basic and acidic residues) spans 352–364; it reads QESHEESSHNEKI. A DNA-binding region (TF-B3 4) is located at residues 387 to 484; it reads FVTLNLTPYN…TSCVLKFCSK (98 aa).

It is found in the nucleus. This is B3 domain-containing protein REM14 (REM14) from Arabidopsis thaliana (Mouse-ear cress).